Here is a 697-residue protein sequence, read N- to C-terminus: Histone-lysine N-methyltransferase SETDB2 (697 aa).

The MBD domain maps to 172–242 (LKKENPLNLP…DNFSFSTQVQ (71 aa)). The Pre-SET domain occupies 304-378 (KCCSCTDGCL…LCQNRVVQHG (75 aa)). Residues cysteine 306, cysteine 308, cysteine 312, cysteine 318, cysteine 320, cysteine 359, cysteine 363, cysteine 365, and cysteine 370 each contribute to the Zn(2+) site. Residues 381–672 (LRLQVFKTDT…AGTELTWDYN (292 aa)) enclose the SET domain. Position 391–393 (391–393 (KGW)) interacts with S-adenosyl-L-methionine. 2 disordered regions span residues 438–461 (KEDN…HSDS) and 529–605 (VHNS…STSP). The span at 565–581 (SGYVSEESSSSVISGGH) shows a compositional bias: low complexity. S-adenosyl-L-methionine-binding positions include arginine 626 and 629–630 (NH). Cysteine 632, cysteine 685, cysteine 687, and cysteine 692 together coordinate Zn(2+).

The protein belongs to the class V-like SAM-binding methyltransferase superfamily.

The protein resides in the nucleus. It is found in the chromosome. The catalysed reaction is N(6),N(6)-dimethyl-L-lysyl(9)-[histone H3] + S-adenosyl-L-methionine = N(6),N(6),N(6)-trimethyl-L-lysyl(9)-[histone H3] + S-adenosyl-L-homocysteine + H(+). Its function is as follows. Histone methyltransferase involved in left-right axis specification in early development and mitosis. Specifically trimethylates 'Lys-9' of histone H3 (H3K9me3). H3K9me3 represents a specific tag for epigenetic transcriptional repression by recruiting HP1 (CBX1, CBX3 and/or CBX5) proteins to methylated histones. Contributes to H3K9me3 in both the interspersed repetitive elements and centromere-associated repeats. Plays a role in chromosome condensation and segregation during mitosis. The sequence is that of Histone-lysine N-methyltransferase SETDB2 (setdb2) from Xenopus tropicalis (Western clawed frog).